Consider the following 333-residue polypeptide: Glycerol-3-phosphate dehydrogenase [NAD(P)+] (333 aa).

The NADPH site is built by tryptophan 12, lysine 33, and lysine 105. Positions 105, 136, and 138 each coordinate sn-glycerol 3-phosphate. Position 140 (alanine 140) interacts with NADPH. Lysine 191, aspartate 244, serine 254, arginine 255, and asparagine 256 together coordinate sn-glycerol 3-phosphate. Lysine 191 acts as the Proton acceptor in catalysis. Residue arginine 255 participates in NADPH binding. NADPH is bound by residues valine 279 and glutamate 281.

This sequence belongs to the NAD-dependent glycerol-3-phosphate dehydrogenase family.

Its subcellular location is the cytoplasm. It catalyses the reaction sn-glycerol 3-phosphate + NAD(+) = dihydroxyacetone phosphate + NADH + H(+). It carries out the reaction sn-glycerol 3-phosphate + NADP(+) = dihydroxyacetone phosphate + NADPH + H(+). Its pathway is membrane lipid metabolism; glycerophospholipid metabolism. Its function is as follows. Catalyzes the reduction of the glycolytic intermediate dihydroxyacetone phosphate (DHAP) to sn-glycerol 3-phosphate (G3P), the key precursor for phospholipid synthesis. This Protochlamydia amoebophila (strain UWE25) protein is Glycerol-3-phosphate dehydrogenase [NAD(P)+].